The chain runs to 44 residues: Photosystem I reaction center subunit IX (44 aa).

Residues 7–27 (YLSVAPVVSTIWFGALAGLLI) form a helical membrane-spanning segment.

It belongs to the PsaJ family.

The protein resides in the plastid. It is found in the chloroplast thylakoid membrane. Its function is as follows. May help in the organization of the PsaE and PsaF subunits. The protein is Photosystem I reaction center subunit IX of Cucumis sativus (Cucumber).